The primary structure comprises 74 residues: Exodeoxyribonuclease 7 small subunit (74 aa).

Belongs to the XseB family. In terms of assembly, heterooligomer composed of large and small subunits.

The protein resides in the cytoplasm. It carries out the reaction Exonucleolytic cleavage in either 5'- to 3'- or 3'- to 5'-direction to yield nucleoside 5'-phosphates.. Its function is as follows. Bidirectionally degrades single-stranded DNA into large acid-insoluble oligonucleotides, which are then degraded further into small acid-soluble oligonucleotides. The sequence is that of Exodeoxyribonuclease 7 small subunit from Leuconostoc citreum (strain KM20).